An 8892-amino-acid polypeptide reads, in one-letter code: Nonribosomal peptide synthetase 32 (8892 aa).

Residues 12–85 (EPSKLVLGRV…QLAESIAQQN (74 aa)) form the Carrier 1 domain. Ser46 carries the O-(pantetheine 4'-phosphoryl)serine modification. Residues 88–112 (AGNGVNGHANGNGMNGNGLHNEATI) are disordered. Over residues 93–108 (NGHANGNGMNGNGLHN) the composition is skewed to low complexity. The segment at 567–956 (PTSANVPRRV…EGVDLSVRDF (390 aa)) is condensation 1. Positions 989–1386 (KMAEQPEALA…GRIDSQIKIR (398 aa)) are adenylation 1. Residues 1523 to 1599 (ISATAVEREL…ELAAEVQATQ (77 aa)) form the Carrier 2 domain. Ser1560 carries the O-(pantetheine 4'-phosphoryl)serine modification. The interval 1609–2039 (GAIALSPIQQ…YGQTVKSLVN (431 aa)) is epimerization 1. The segment at 2083–2518 (EDILPCSPIQ…LLLPAEEAKL (436 aa)) is condensation 2. Residues 2543–2934 (SQPEALAVSA…GRRDTQVKIR (392 aa)) form an adenylation 2 region. Residues 3061–3137 (SSATPIEREL…ELAANSQTGR (77 aa)) form the Carrier 3 domain. Ser3098 carries the post-translational modification O-(pantetheine 4'-phosphoryl)serine. Residues 3153–3590 (LSPIQQMFFD…GDTVKTLVEE (438 aa)) are epimerization 2. The tract at residues 3634–4061 (EDILPCSAIQ…NVDRPLRELT (428 aa)) is condensation 3. The interval 4098–4488 (TLPEALAISS…GRIDSQIKIR (391 aa)) is adenylation 3. Positions 4627-4703 (APTTDLERKL…DLSRVVEEKC (77 aa)) constitute a Carrier 4 domain. At Ser4664 the chain carries O-(pantetheine 4'-phosphoryl)serine. The condensation 4 stretch occupies residues 4760–5181 (EDVYPCSPMQ…LLTDEDCDQL (422 aa)). The interval 5205-5605 (TSYPTAPAIS…GRRDTQVKIR (401 aa)) is adenylation 4. Positions 5745-5821 (MPTTPMEQKL…DLAEAMEEKG (77 aa)) constitute a Carrier 5 domain. Residue Ser5782 is modified to O-(pantetheine 4'-phosphoryl)serine. A condensation 5 region spans residues 5868–6285 (EDVYPCSPLQ…LLSPGQMAQI (418 aa)). An adenylation 5 region spans residues 6307–6700 (QMTTRPAATA…GRIDTQIKIR (394 aa)). The 78-residue stretch at 6834–6911 (ELTTTIERQL…ELATQTQTTE (78 aa)) folds into the Carrier 6 domain. Ser6872 carries the O-(pantetheine 4'-phosphoryl)serine modification. Residues 6923 to 7360 (NFQLSPIQQM…SYSCAIESLV (438 aa)) form an epimerization 3 region. The interval 7403–7834 (VQDILPCSPI…LLPAGDANQI (432 aa)) is condensation 6. The adenylation 6 stretch occupies residues 7855-8253 (QQMAAHPTAQ…LDRIGTQVKI (399 aa)). A Carrier 7 domain is found at 8380–8456 (APVGRNEEIL…AMAARVTADI (77 aa)). Residue Ser8417 is modified to O-(pantetheine 4'-phosphoryl)serine. Residues 8490-8878 (HFAFDATGPC…EIIEDSGCNV (389 aa)) are condensation 7.

The protein belongs to the NRP synthetase family.

It participates in secondary metabolite biosynthesis. In terms of biological role, nonribosomal peptide synthetase; part of the gene cluster that mediates the biosynthesis of the lipopeptides W493 A and B. W493 A and B consist of six amino acid residues D-allo-thr, L-Ala, D-Ala, L-Gln, D-Tyr, and L-Val/L-Ile linked to a 3-hydroxy-4-methyltetradecanoic acid polyketide chain. The biosynthesis starts with formation of the linear polyketide chain by the highly reducing polyketide synthase PKS40. The gene cluster contains a putative acyl-CoA ligase (FPSE_09184) for formation of a CoA thioester polyketide. The thiol bond could be hydrolyzed by the putative thioesterase (FPSE_09186) and then accepted by the first T domain in module 1 of NRPS32. The second T domain is responsible for accepting a threonine, which is adenylated by the A domain and epimerized to the D-allo-threonine formed by the E domain. The five successive modules incorporate Ala, Ala, Gln, Tyr, and Val/Ile into the final product, which is released by cyclization. This Fusarium pseudograminearum (strain CS3096) (Wheat and barley crown-rot fungus) protein is Nonribosomal peptide synthetase 32.